Here is a 903-residue protein sequence, read N- to C-terminus: Calcium-activated chloride channel regulator 1 (903 aa).

The signal sequence occupies residues 1–21; it reads MVPRLTVILFLTLHLLPGMKS. The tract at residues 45 to 199 is metalloprotease domain; that stretch reads DEKLIQNIKE…HITGTNVIVK (155 aa). His155 lines the Zn(2+) pocket. Glu156 is an active-site residue. Residues His159 and Asp166 each contribute to the Zn(2+) site. The region spanning 308-476 is the VWFA domain; the sequence is VVCLVLDKSG…NGLTNAFSRI (169 aa). N-linked (GlcNAc...) asparagine glycosylation is found at Asn360, Asn372, Asn504, and Asn842. Residues 883–903 traverse the membrane as a helical segment; the sequence is GTKISAINLAIFALAMILSIV.

The protein belongs to the CLCR family. In terms of processing, glycosylated. Post-translationally, the 125-kDa product is autoproteolytically processed by the metalloprotease domain and yields to two cell-surface-associated subunits, a 90-kDa protein and a group of 37- to 41-kDa proteins. The cleavage is necessary for calcium-activated chloride channel (CaCC) activation activity. As to expression, trachea.

The protein localises to the apical cell membrane. May be involved in mediating calcium-activated chloride conductance. May play critical roles in goblet cell metaplasia, mucus hypersecretion, cystic fibrosis and AHR. May be involved in the regulation of mucus production and/or secretion by goblet cells. Involved in the regulation of tissue inflammation in the innate immune response. May play a role as a tumor suppressor. Induces MUC5AC. The protein is Calcium-activated chloride channel regulator 1 of Bos taurus (Bovine).